We begin with the raw amino-acid sequence, 130 residues long: Albumin-1 B (130 aa).

The first 26 residues, 1–26 (MASVKLASLMVLFATLGMFLTKNVGA), serve as a signal peptide directing secretion. 3 disulfides stabilise this stretch: C29/C46, C33/C48, and C41/C58. Propeptides lie at residues 64–69 (VFLRTN) and 123–130 (LLKSVSTA).

In terms of processing, the C-terminal glycine may be removed from PA1b. Major component of both the cotyledons and embryonic axes of mature seeds.

In terms of biological role, PA1b binds to basic 7S globulin (BG) and stimulates its phosphorylation activity. Involved in the signal transduction system to regulate the growth and differentiation as a hormone peptide. Toxic to various insects through binding to a high affinity binding site in the insect gut. The chain is Albumin-1 B from Pisum sativum (Garden pea).